The primary structure comprises 197 residues: Prefoldin subunit 3 (197 aa).

A disordered region spans residues 1–26 (MASLALRGSSENPAPTKDTTTNPRGI). Residues 9-23 (SSENPAPTKDTTTNP) are compositionally biased toward polar residues.

It belongs to the prefoldin subunit alpha family. As to quaternary structure, heterohexamer of two PFD-alpha type and four PFD-beta type subunits.

Prefoldin subunit; part of the gene cluster that mediates the biosynthesis of elsinochromes, pigments consisting of at least four interconvertible tautomers (A, B, C and D) that have a core phenolic quinone to which various side chains are attached and which play an important role in fungal pathogenesis. The non-reducing polyketide synthase PKS1 was proposed to iteratively catalyze decarboxylation between acetyl-CoA and malonyl-CoA subunits for polyketide chain elongation. The released polyketide undergoes cyclization to form an aromatic ring, and proceeds via serial modification steps to produce the heptaketide back- bone of elsinochrome. As elsinochrome has a symmetrical structure, two identical heptaketides are fused to form a core 1,2-dihydrobenzo-perylene ring structure, which can then be successively modified to produce the various derivatives of elsinochrome. Some of these reactions may be cooperatively carried out, at least in part, by the products of RDT1, OXR1 and PKS1. PRF1, embedded within the elsinochrome cluster possibly functions to stabilize some of the biosynthetic enzymes required for elsinochrome production. As prefoldin is a hexamer containing 2 a and 4 b subunits, additional prefoldin subunits, whose coding genes may not immediately link to the elsinochrome biosynthetic gene cluster, are required to fulfill the chaperone function. In addition, no methyltransferase-coding gene exists within the biosynthetic gene cluster, even though elsinochrome has four methyl groups at positions C3, C7, C8 and C12. Apparently, the identified gene cluster does not contain the entire entourage of genes responsible for elsinochrome biosynthesis. Once elsinochrome is synthesized, it must be exported outside the fungal cells, which is probably accomplished by the ECT1 transporter, to avoid toxicity. The polypeptide is Prefoldin subunit 3 (Elsinoe fawcettii (Citrus scab fungus)).